Here is a 458-residue protein sequence, read N- to C-terminus: Phosphoglucosamine mutase (458 aa).

Ser109 functions as the Phosphoserine intermediate in the catalytic mechanism. 4 residues coordinate Mg(2+): Ser109, Asp251, Asp253, and Asp255. Position 109 is a phosphoserine (Ser109).

The protein belongs to the phosphohexose mutase family. The cofactor is Mg(2+). Post-translationally, activated by phosphorylation.

It carries out the reaction alpha-D-glucosamine 1-phosphate = D-glucosamine 6-phosphate. Functionally, catalyzes the conversion of glucosamine-6-phosphate to glucosamine-1-phosphate. The protein is Phosphoglucosamine mutase of Myxococcus xanthus (strain DK1622).